The following is a 415-amino-acid chain: Phosphoribosylamine--glycine ligase (415 aa).

An ATP-grasp domain is found at 108–311; the sequence is KKIMKKYNIP…LMQHIIDLDE (204 aa). 134-191 is an ATP binding site; the sequence is IENCELPVVVKKDGLAAGKGVIIADTIEAARSAIEIMYGDEEEGTVVFETFLEGEEFS. The Mg(2+) site is built by Glu281 and Asn283.

The protein belongs to the GARS family. Mg(2+) serves as cofactor. Mn(2+) is required as a cofactor.

It carries out the reaction 5-phospho-beta-D-ribosylamine + glycine + ATP = N(1)-(5-phospho-beta-D-ribosyl)glycinamide + ADP + phosphate + H(+). The protein operates within purine metabolism; IMP biosynthesis via de novo pathway; N(1)-(5-phospho-D-ribosyl)glycinamide from 5-phospho-alpha-D-ribose 1-diphosphate: step 2/2. In Staphylococcus aureus (strain Mu50 / ATCC 700699), this protein is Phosphoribosylamine--glycine ligase.